The primary structure comprises 1478 residues: FYVE and coiled-coil domain-containing protein 1 (1478 aa).

A2 carries the post-translational modification N-acetylalanine. The stretch at 4 to 33 forms a coiled coil; it reads TNAESQLQRIIRDLQDAVTELSKEFQEAGE. The RUN domain occupies 36 to 169; it reads TDDSTSLHKF…VQFDLASRGF (134 aa). The residue at position 196 (S196) is a Phosphoserine. Positions 225 to 280 form a coiled coil; that stretch reads NNEALEGFDEMRLELDQLEVREKQLRERMQQLDRENQELRAAVSQQGEQLQTERER. S342 is modified (phosphoserine). Phosphothreonine is present on T381. Coiled-coil stretches lie at residues 394-555 and 596-1151; these read SDAA…MLER and QEAQ…KDAL. The disordered stretch occupies residues 586-613; sequence GKPEEEQRGLQEAQLDDTKVQEGSQEEE. The residue at position 878 (S878) is a Phosphoserine. An FYVE-type zinc finger spans residues 1173–1231; sequence DTEANHCLDCKREFSWMVRRHHCRICGRIFCYYCCNNYVLSKHGGKKERCCRACFQKLS. Residues C1179, C1182, C1195, C1198, C1203, C1206, C1223, and C1226 each contribute to the Zn(2+) site. The span at 1231–1261 shows a compositional bias: low complexity; it reads SEGPGSPDSSGSGTSQGEPSPALSPASPGPQ. 2 disordered regions span residues 1231-1277 and 1294-1332; these read SEGP…PPDD and SGSS…DMPV. Polar residues-rich tracts occupy residues 1294 to 1305 and 1314 to 1324; these read SGSSLPETPTET and EQDTTSTSLTP. The 130-residue stretch at 1337–1466 folds into the GOLD domain; sequence EICLLKSGEL…SKKVFYHLTV (130 aa).

As to quaternary structure, can form homodimers. Interacts (via C-terminus) with MAP1LC3B. Interacts with RAB7A; the interaction with RAB7A induces FYCO1 recruitment to late endosomal/lysosomal compartments. Interacts with MAP1LC3B. As to expression, expressed in heart and skeletal muscle.

The protein localises to the cytoplasmic vesicle. The protein resides in the autophagosome. It localises to the endosome. It is found in the lysosome. In terms of biological role, may mediate microtubule plus end-directed vesicle transport. The sequence is that of FYVE and coiled-coil domain-containing protein 1 (FYCO1) from Homo sapiens (Human).